The primary structure comprises 371 residues: SufE-like protein 1, chloroplastic/mitochondrial (371 aa).

The N-terminal 66 residues, 1–66 (MAAAMSSSCC…ISTGIVPPPS (66 aa)), are a transit peptide targeting the chloroplast and mitochondrion. C131 functions as the Cysteine persulfide intermediate in the catalytic mechanism. Residue C131 is modified to S-glutathionyl cysteine. Positions 218 to 249 (VKGEEDSSSGESSESSFVSIPETKDEANVPEV) are disordered.

It belongs to the SufE family. As to quaternary structure, heterotetramer with NFS2. Interacts with NFS2 and NIFS1. Interacts in vitro with GRXS14, GRXS15, GRXS16 and GRXS17, but not with GRXC5. Interacts in vivo only with GRXS14 and GRXS16. Post-translationally, glutathionylated. Glutathionylation strongly reduces the stimulation of NFS2 activity. In terms of tissue distribution, expressed in roots, leaves, stems and flowers.

It localises to the plastid. It is found in the chloroplast stroma. Its subcellular location is the mitochondrion. The protein operates within cofactor biosynthesis; iron-sulfur cluster biosynthesis. Participates in cysteine desulfurization mediated by NFS2 in chloroplast and NIFS1 in mitochondrion. Activates the cysteine desulfurase activity of NFS2. Cysteine desulfurization mobilizes sulfur from L-cysteine to yield L-alanine and supplies the inorganic sulfur for iron-sulfur (Fe-S) cluster formation. Glutaredoxins regulate SUFE1 activity by inducing its reduction and deglutathionylation. This is SufE-like protein 1, chloroplastic/mitochondrial from Arabidopsis thaliana (Mouse-ear cress).